The following is a 757-amino-acid chain: MQNWETTATTNYEQHNAWYNSMFAANIKQEPGHHLDGNSVASSPRQSPIPSTNHLEQFLKQQQQHQQQPMDTLCAMTPSPSQNDQNSLQHYDANLQQQLLQQQQYQQHFQAAQQQHHHHHHLMGGFNPLTPPGLPNPMQHFYGGNLRPSPQPTPTSASTIAPVAVATGSSEKLQALTPPMDVTPPKSPAKSSQSNIEPEKEHDQMSNSSEDMKYMAESEDDDTNIRMPIYNSHGKMKNYKCKTCGVVAITKVDFWAHTRTHMKPDKILQCPKCPFVTEFKHHLEYHIRKHKNQKPFQCDKCSYTCVNKSMLNSHRKSHSSVYQYRCADCDYATKYCHSFKLHLRKYGHKPGMVLDEDGTPNPSLVIDVYGTRRGPKSKNGGPIASGGSGSGSRKSNVAAVAPQQQQSQPAQPVATSHLSAALQGFPLVQSNSAPPAASPVLPLPASPAKSVASVEQTPSLPSPANLLPPLASLLQQNRNMAFFPYWNLNLQMLAAQQQAAVLAQLSPRMREQLQQQNQQQSDNEEEDQDDEYERKSVDSAMDLSQGTPVKEDEQQQQPQQPLAMNLKVEEEATPLMSSSNASRRKGRVLKLDTLLQLRSEAMTSPEQLKVPSTPMPTASSPIAGRKPMPEEHCSGTSSADESMERPHVRQANTSASSTASSSGNSSNASSNSNGNSSSNSSSNGTTSAVAAPPSGTPAAAGAIYECKYCDIFFKDAVLYTIHMGYHSCDDVFKCNMCGEKCDGPVGLFVHMARNAHS.

Disordered stretches follow at residues 30-51 (EPGH…PIPS) and 171-213 (EKLQ…EDMK). Residues 39-51 (SVASSPRQSPIPS) show a composition bias toward polar residues. The segment covering 197-213 (EPEKEHDQMSNSSEDMK) has biased composition (basic and acidic residues). 4 C2H2-type zinc fingers span residues 239–261 (YKCK…TRTH), 268–290 (LQCP…IRKH), 296–318 (FQCD…RKSH), and 324–348 (YRCA…KYGH). 3 disordered regions span residues 367 to 416 (DVYG…VATS), 511 to 535 (EQLQ…YERK), and 602 to 694 (MTSP…APPS). 2 stretches are compositionally biased toward low complexity: residues 397-414 (VAAV…QPVA) and 512-521 (QLQQQNQQQS). A compositionally biased stretch (acidic residues) spans 522 to 531 (DNEEEDQDDE). A compositionally biased stretch (low complexity) spans 651 to 694 (ANTSASSTASSSGNSSNASSNSNGNSSSNSSSNGTTSAVAAPPS). 2 consecutive C2H2-type zinc fingers follow at residues 704–726 (YECK…MGYH) and 732–756 (FKCN…RNAH).

Belongs to the hunchback C2H2-type zinc-finger protein family.

Its subcellular location is the nucleus. Functionally, gap class segmentation protein that controls development of head structures. The protein is Protein hunchback (hb) of Drosophila sechellia (Fruit fly).